Here is a 208-residue protein sequence, read N- to C-terminus: Large ribosomal subunit protein uL4 (208 aa).

A disordered region spans residues Arg-45–Met-83. Residues Gly-69–Ser-80 are compositionally biased toward polar residues.

This sequence belongs to the universal ribosomal protein uL4 family. As to quaternary structure, part of the 50S ribosomal subunit.

Its function is as follows. One of the primary rRNA binding proteins, this protein initially binds near the 5'-end of the 23S rRNA. It is important during the early stages of 50S assembly. It makes multiple contacts with different domains of the 23S rRNA in the assembled 50S subunit and ribosome. In terms of biological role, forms part of the polypeptide exit tunnel. The chain is Large ribosomal subunit protein uL4 from Chlorobium luteolum (strain DSM 273 / BCRC 81028 / 2530) (Pelodictyon luteolum).